The primary structure comprises 241 residues: ATP synthase subunit a (241 aa).

5 consecutive transmembrane segments (helical) span residues 30 to 50 (GQVFLTSWILLGALLVFISVG), 91 to 111 (FIGTLFLFVFVSNWGGALIPW), 128 to 148 (INTTIALALLVSLSYFYAGLS), 193 to 213 (LVVGVLVFLVPLVLPIPVMFL), and 214 to 234 (GLFTSAIQALIFATLAAYYIG).

It belongs to the ATPase A chain family. F-type ATPases have 2 components, CF(1) - the catalytic core - and CF(0) - the membrane proton channel. CF(1) has five subunits: alpha(3), beta(3), gamma(1), delta(1), epsilon(1). CF(0) has four main subunits: a, b, b' and c.

Its subcellular location is the cellular thylakoid membrane. Key component of the proton channel; it plays a direct role in the translocation of protons across the membrane. This chain is ATP synthase subunit a, found in Prochlorococcus marinus subsp. pastoris (strain CCMP1986 / NIES-2087 / MED4).